The sequence spans 275 residues: Phosphonoacetaldehyde hydrolase (275 aa).

The active-site Nucleophile is D15. Residues D15 and A17 each contribute to the Mg(2+) site. Catalysis depends on K56, which acts as the Schiff-base intermediate with substrate. Residue D189 coordinates Mg(2+).

The protein belongs to the HAD-like hydrolase superfamily. PhnX family. As to quaternary structure, homodimer. Mg(2+) serves as cofactor.

It catalyses the reaction phosphonoacetaldehyde + H2O = acetaldehyde + phosphate + H(+). Functionally, involved in phosphonate degradation. The sequence is that of Phosphonoacetaldehyde hydrolase from Pseudomonas fluorescens (strain SBW25).